A 419-amino-acid polypeptide reads, in one-letter code: UDP-N-acetylglucosamine 1-carboxyvinyltransferase 2 (419 aa).

A phosphoenolpyruvate-binding site is contributed by 24-25 (KN). Residue arginine 94 participates in UDP-N-acetyl-alpha-D-glucosamine binding. Cysteine 118 acts as the Proton donor in catalysis. Cysteine 118 is subject to 2-(S-cysteinyl)pyruvic acid O-phosphothioketal. UDP-N-acetyl-alpha-D-glucosamine contacts are provided by residues 123–127 (RPIDQ), aspartate 307, and isoleucine 329.

Belongs to the EPSP synthase family. MurA subfamily.

The protein localises to the cytoplasm. It carries out the reaction phosphoenolpyruvate + UDP-N-acetyl-alpha-D-glucosamine = UDP-N-acetyl-3-O-(1-carboxyvinyl)-alpha-D-glucosamine + phosphate. Its pathway is cell wall biogenesis; peptidoglycan biosynthesis. Functionally, cell wall formation. Adds enolpyruvyl to UDP-N-acetylglucosamine. This chain is UDP-N-acetylglucosamine 1-carboxyvinyltransferase 2, found in Staphylococcus aureus (strain MRSA252).